The primary structure comprises 617 residues: Dihydroxy-acid dehydratase (617 aa).

Residue Asp81 coordinates Mg(2+). Cys122 contacts [2Fe-2S] cluster. Positions 123 and 124 each coordinate Mg(2+). Lys124 carries the N6-carboxylysine modification. Residue Cys197 coordinates [2Fe-2S] cluster. Glu494 contacts Mg(2+). Ser520 serves as the catalytic Proton acceptor.

This sequence belongs to the IlvD/Edd family. As to quaternary structure, homodimer. [2Fe-2S] cluster is required as a cofactor. The cofactor is Mg(2+).

It catalyses the reaction (2R)-2,3-dihydroxy-3-methylbutanoate = 3-methyl-2-oxobutanoate + H2O. The enzyme catalyses (2R,3R)-2,3-dihydroxy-3-methylpentanoate = (S)-3-methyl-2-oxopentanoate + H2O. The protein operates within amino-acid biosynthesis; L-isoleucine biosynthesis; L-isoleucine from 2-oxobutanoate: step 3/4. Its pathway is amino-acid biosynthesis; L-valine biosynthesis; L-valine from pyruvate: step 3/4. Functions in the biosynthesis of branched-chain amino acids. Catalyzes the dehydration of (2R,3R)-2,3-dihydroxy-3-methylpentanoate (2,3-dihydroxy-3-methylvalerate) into 2-oxo-3-methylpentanoate (2-oxo-3-methylvalerate) and of (2R)-2,3-dihydroxy-3-methylbutanoate (2,3-dihydroxyisovalerate) into 2-oxo-3-methylbutanoate (2-oxoisovalerate), the penultimate precursor to L-isoleucine and L-valine, respectively. This Parafrankia sp. (strain EAN1pec) protein is Dihydroxy-acid dehydratase.